The chain runs to 511 residues: 2-isopropylmalate synthase (511 aa).

Residues 5-267 (LIVFDTTLRD…DTRIDATQIV (263 aa)) enclose the Pyruvate carboxyltransferase domain. Asp-14, His-202, His-204, and Asn-238 together coordinate Mn(2+). The segment at 393–511 (RLVASRFHSE…SKLERLNPQL (119 aa)) is regulatory domain.

Belongs to the alpha-IPM synthase/homocitrate synthase family. LeuA type 1 subfamily. In terms of assembly, homodimer. Mn(2+) is required as a cofactor.

The protein resides in the cytoplasm. The catalysed reaction is 3-methyl-2-oxobutanoate + acetyl-CoA + H2O = (2S)-2-isopropylmalate + CoA + H(+). It participates in amino-acid biosynthesis; L-leucine biosynthesis; L-leucine from 3-methyl-2-oxobutanoate: step 1/4. Catalyzes the condensation of the acetyl group of acetyl-CoA with 3-methyl-2-oxobutanoate (2-ketoisovalerate) to form 3-carboxy-3-hydroxy-4-methylpentanoate (2-isopropylmalate). This Aromatoleum aromaticum (strain DSM 19018 / LMG 30748 / EbN1) (Azoarcus sp. (strain EbN1)) protein is 2-isopropylmalate synthase.